The primary structure comprises 122 residues: Large ribosomal subunit protein uL14 (122 aa).

This sequence belongs to the universal ribosomal protein uL14 family. As to quaternary structure, part of the 50S ribosomal subunit. Forms a cluster with proteins L3 and L19. In the 70S ribosome, L14 and L19 interact and together make contacts with the 16S rRNA in bridges B5 and B8.

Binds to 23S rRNA. Forms part of two intersubunit bridges in the 70S ribosome. The polypeptide is Large ribosomal subunit protein uL14 (Picosynechococcus sp. (strain ATCC 27264 / PCC 7002 / PR-6) (Agmenellum quadruplicatum)).